Reading from the N-terminus, the 523-residue chain is Rho guanine nucleotide exchange factor 8 (523 aa).

Residues 44–57 (VESNTPESQNSDSF) show a composition bias toward polar residues. Disordered stretches follow at residues 44–83 (VESN…ERQQ) and 442–523 (ETSD…KDRH). One can recognise a PRONE domain in the interval 76–440 (GKRSERQQAD…TLALKQTLLA (365 aa)). Residues 465 to 475 (EAEKHDPHSKT) are compositionally biased toward basic and acidic residues.

In terms of assembly, homodimer. The homodimer interacts with ARAC5/ROP4. Interacts with ARAC11/ROP1 and ARAC10/ROP11. Interacts with PRK6. In terms of tissue distribution, expressed in pollen grains and pollen tubes.

It localises to the cell membrane. Its function is as follows. Guanine-nucleotide exchange factor (GEF) that acts as an activator of Rop (Rho of plants) GTPases by promoting the exchange of GDP for GTP. Active as homodimer. This chain is Rho guanine nucleotide exchange factor 8, found in Arabidopsis thaliana (Mouse-ear cress).